Consider the following 246-residue polypeptide: MAELTPIIVIPARMQATRLPGKPLADIHGEPMIIHVWRRSVQAGLGPVVVACSEAEVFDAVHAHGGQAVMTDPDHPSGSDRVWEAVRKLDPEGRFDAIVNVQGDLPTLDPQIIRAVFAPLAEPGVDVATLVTEITNEEERTNPNVVKAVVGLRPGQRVGRALYFSRATVPANAGPHYHHIGLYAYRRDSLERFVSLPQGVLESREKLEQLRALENGMRIDCALVDTVPLGVDTPADLERARALLKA.

The protein belongs to the KdsB family.

It is found in the cytoplasm. The catalysed reaction is 3-deoxy-alpha-D-manno-oct-2-ulosonate + CTP = CMP-3-deoxy-beta-D-manno-octulosonate + diphosphate. The protein operates within nucleotide-sugar biosynthesis; CMP-3-deoxy-D-manno-octulosonate biosynthesis; CMP-3-deoxy-D-manno-octulosonate from 3-deoxy-D-manno-octulosonate and CTP: step 1/1. It functions in the pathway bacterial outer membrane biogenesis; lipopolysaccharide biosynthesis. Functionally, activates KDO (a required 8-carbon sugar) for incorporation into bacterial lipopolysaccharide in Gram-negative bacteria. This is 3-deoxy-manno-octulosonate cytidylyltransferase from Paramagnetospirillum magneticum (strain ATCC 700264 / AMB-1) (Magnetospirillum magneticum).